A 189-amino-acid polypeptide reads, in one-letter code: DnaJ homolog subfamily C member 5G (189 aa).

The J domain occupies 17–98 (SLYAVLDLKK…KKRKIYDQHG (82 aa)). Residues 154–189 (PEQDSGRKYQQNVQSQPPRSGAKCDFRSEENSEDDF) form a disordered region. The segment covering 161–171 (KYQQNVQSQPP) has biased composition (polar residues).

Post-translationally, palmitoylated. As to expression, testis specific.

Its subcellular location is the membrane. The polypeptide is DnaJ homolog subfamily C member 5G (DNAJC5G) (Homo sapiens (Human)).